A 118-amino-acid polypeptide reads, in one-letter code: Small ribosomal subunit protein uS13 (118 aa).

The segment at S94–K118 is disordered.

This sequence belongs to the universal ribosomal protein uS13 family. In terms of assembly, part of the 30S ribosomal subunit. Forms a loose heterodimer with protein S19. Forms two bridges to the 50S subunit in the 70S ribosome.

Functionally, located at the top of the head of the 30S subunit, it contacts several helices of the 16S rRNA. In the 70S ribosome it contacts the 23S rRNA (bridge B1a) and protein L5 of the 50S subunit (bridge B1b), connecting the 2 subunits; these bridges are implicated in subunit movement. Contacts the tRNAs in the A and P-sites. The chain is Small ribosomal subunit protein uS13 from Idiomarina loihiensis (strain ATCC BAA-735 / DSM 15497 / L2-TR).